The primary structure comprises 909 residues: MLYCGSTGGHYMIMTTNNNSNNNNNNNNNNNNNNNNNNNNNINQNHQHQHQHHHHQQQQQQQQQQQQQQQQQQQQQQQQQQQQQQQNYGESTTSTSMIPPSITTSLTPLTPTLSSQPQNIQQQQQQQHHHQQQHHHHHQQTQQQQQQILSPMMGSKRKLEEDMGVGQPTSNLTNEYLMSNNNSLKPILVSSPLLTPLSASPGLTSMQMAFANASLSAPSTPLSMSPSLGPCSAPMSPSKKSKNSRSSSKSKYQNSEERWQSTTSKDNGKPSSPGIVKGPWKDEEDAKLVELVNKCGPKEWSSIAAKIPGRIGKQCRERWFNHLSPEVRKTNWTPEEDKIIIDAHASLGNKWTAISKMLDGRPANAIKNHWNSTLLKKIGGDSKSLNKEKDDDDDDDEDAEDGSSPVLSPISLYQSSSSTTTTTTTTTTNSSEKSNIPPFALSGSTTTSTNNLNNSTNSTNSINNNNNNNNNNNNSSNTNTAITTNEPLVAPKIIRAQTTPNSSPSLSSKKTHDKQKVPQSPKNSKQQQTQQQTQQQTQQQLQQQQQQQQQQQQQQQQQQQQQHIQQQQMPVISQQPHIQQLPIDQQIQNAQFQQFHLQQPSMPSSTSVNIIPNQSSMEQHHYQQQQQAQQQQHQQQQHQQQQQHQQQQQQQQYLMQQHQQYQQQYQLMQQHYQQQLSQQHHQQQHHPQQAQQHHPQQVQHHQQHINTTHNQHQQQQQQQQQQQQQQTNNSQVNSNNTDTTFSNSHPIEPHEVPYYYDYWGSSTSGSQTLIPSDNTTNTYTIENNNDFLLFDDNQHRIQPLQQHQHIKQEHAQMSHLPYHPTQPNNLNTTTTTTNNNNNNNNNNNNNNNNNNIPTPNMSASTTGTINHHIHQTHHHLTTPLSQSTPSVSTDQNNYINYDISSLFSLPNEI.

Disordered regions lie at residues 15–65 (TTNN…QQQQ), 84–149 (QQQN…QQIL), and 216–280 (SAPS…KGPW). The span at 17–46 (NNNSNNNNNNNNNNNNNNNNNNNNNINQNH) shows a compositional bias: low complexity. The segment covering 47–56 (QHQHQHHHHQ) has biased composition (basic residues). Low complexity predominate over residues 84-126 (QQQNYGESTTSTSMIPPSITTSLTPLTPTLSSQPQNIQQQQQQ). Residues 127 to 139 (QHHHQQQHHHHHQ) are compositionally biased toward basic residues. The segment covering 216 to 226 (SAPSTPLSMSP) has biased composition (polar residues). HTH myb-type domains follow at residues 272–327 (SPGI…SPEV) and 328–378 (RKTN…LKKI). 2 DNA-binding regions (H-T-H motif) span residues 300-323 (WSSIAAKIPGRIGKQCRERWFNHL) and 351-374 (WTAISKMLDGRPANAIKNHWNSTL). Basic and acidic residues predominate over residues 379 to 389 (GGDSKSLNKEK). Disordered regions lie at residues 379–482 (GGDS…NTAI), 497–531 (QTTPNSSPSLSSKKTHDKQKVPQSPKNSKQQQTQQ), 616–642 (SMEQHHYQQQQQAQQQQHQQQQHQQQQ), 672–748 (YQQQ…HPIE), and 826–855 (LNTTTTTTNNNNNNNNNNNNNNNNNNIPTP). Positions 390 to 401 (DDDDDDDEDAED) are enriched in acidic residues. 2 stretches are compositionally biased toward low complexity: residues 415–431 (SSSSTTTTTTTTTTNSS) and 444–482 (STTTSTNNLNNSTNSTNSINNNNNNNNNNNNSSNTNTAI). Residues 497 to 508 (QTTPNSSPSLSS) show a composition bias toward polar residues. 4 stretches are compositionally biased toward low complexity: residues 622 to 642 (YQQQQQAQQQQHQQQQHQQQQ), 672 to 726 (YQQQ…QQQQ), 733 to 744 (NSNNTDTTFSNS), and 826 to 851 (LNTTTTTTNNNNNNNNNNNNNNNNNN).

It localises to the nucleus. The polypeptide is Myb-like protein Q (mybQ) (Dictyostelium discoideum (Social amoeba)).